The following is a 72-amino-acid chain: Translation initiation factor IF-1 1 (72 aa).

Positions 1–72 constitute an S1-like domain; sequence MAKDDVIQMQ…SRARIVFRAK (72 aa).

This sequence belongs to the IF-1 family. Component of the 30S ribosomal translation pre-initiation complex which assembles on the 30S ribosome in the order IF-2 and IF-3, IF-1 and N-formylmethionyl-tRNA(fMet); mRNA recruitment can occur at any time during PIC assembly.

It is found in the cytoplasm. Functionally, one of the essential components for the initiation of protein synthesis. Stabilizes the binding of IF-2 and IF-3 on the 30S subunit to which N-formylmethionyl-tRNA(fMet) subsequently binds. Helps modulate mRNA selection, yielding the 30S pre-initiation complex (PIC). Upon addition of the 50S ribosomal subunit IF-1, IF-2 and IF-3 are released leaving the mature 70S translation initiation complex. This is Translation initiation factor IF-1 1 from Ralstonia nicotianae (strain ATCC BAA-1114 / GMI1000) (Ralstonia solanacearum).